A 311-amino-acid chain; its full sequence is p-hydroxybenzoic acid efflux pump subunit AaeA (311 aa).

Residues 11–31 (VGITVLVVVLAVIAIFNVWAF) traverse the membrane as a helical segment.

The protein belongs to the membrane fusion protein (MFP) (TC 8.A.1) family.

It localises to the cell inner membrane. Functionally, forms an efflux pump with AaeB. The chain is p-hydroxybenzoic acid efflux pump subunit AaeA from Yersinia pseudotuberculosis serotype O:3 (strain YPIII).